A 76-amino-acid polypeptide reads, in one-letter code: uncharacterized protein (76 aa).

The segment at 1-24 is disordered; it reads MPLRLCQGRKDRASDPVRDDGSPP. Residues 8–22 are compositionally biased toward basic and acidic residues; sequence GRKDRASDPVRDDGS.

This is an uncharacterized protein from Dryophytes versicolor (chameleon treefrog).